We begin with the raw amino-acid sequence, 115 residues long: T cell receptor delta variable 2 (115 aa).

A signal peptide spans 1-19; it reads MQRISSLIHLSLFWAGVMS. An Ig-like domain is found at 25–115; it reads PEHQTVPVSI…EGSYYCACDT (91 aa). Cysteine 42 and cysteine 111 form a disulfide bridge.

In terms of assembly, gamma-delta TR is a heterodimer composed of a gamma and delta chain; disulfide-linked. The gamma-delta TR is associated with the transmembrane signaling CD3 coreceptor proteins following the stoichiometry: a single gamma-delta TR heterodimer associates with one CD3D-CD3E heterodimer, one CD3G-CD3E heterodimer and one CD247 homodimer forming a stable octameric structure. Upon activation, gamma-delta TR complex associates with FCER1G to initiate intracellular signaling.

It localises to the cell membrane. V region of the variable domain of T cell receptor (TR) delta chain that participates in the antigen recognition. Gamma-delta TRs recognize a variety of self and foreign non-peptide antigens frequently expressed at the epithelial boundaries between the host and external environment, including endogenous lipids presented by MH-like protein CD1D and phosphoantigens presented by butyrophilin-like molecule BTN3A1. Upon antigen recognition induces rapid, innate-like immune responses involved in pathogen clearance and tissue repair. Binding of gamma-delta TR complex to antigen triggers phosphorylation of immunoreceptor tyrosine-based activation motifs (ITAMs) in the CD3 chains by the LCK and FYN kinases, allowing the recruitment, phosphorylation, and activation of ZAP70 that facilitates phosphorylation of the scaffolding proteins LCP2 and LAT. This lead to the formation of a supramolecular signalosome that recruits the phospholipase PLCG1, resulting in calcium mobilization and ERK activation, ultimately leading to T cell expansion and differentiation into effector cells. Gamma-delta TRs are produced through somatic rearrangement of a limited repertoire of variable (V), diversity (D), and joining (J) genes. The potential diversity of gamma-delta TRs is conferred by the unique ability to rearrange (D) genes in tandem and to utilize all three reading frames. The combinatorial diversity is considerably increased by the sequence exonuclease trimming and random nucleotide (N) region additions which occur during the V-(D)-J rearrangements. This chain is T cell receptor delta variable 2, found in Homo sapiens (Human).